Here is a 495-residue protein sequence, read N- to C-terminus: MSRIRHHRFIQSCLVISTLLITLTGCQVESEPKTKLEQIRERGILRVSTLNNQLSYYIGSNGPTGLDYDLAKAFAEKLEVKLEITPAYTYSGLFPALERNEVDIIAANMTITPERLQKFRPGPVYYYVSQQVVYKKGSWRPRNIKNLTQLDENLTIVKDSSFEGTLIKLKEKYPNLDWNTAADTDVSELLKKVATGEIHYTLADSVELSLTQRIHPDLAVAFEVTEDQPVAWFLQQTEDDSLQALLIEFFGELKESGKLALLEEKYFGHVESFDYVDTRAFIRALESKLPKWEPLFKKYAGDFDWRFLAALSYQESHWNPLAKSPTGVRGMMMLTLPTAQSVGVKNRLNPEQSIRGGAEYLRRIVKRVPDSITEHEKIWFALASYNIGFGHMMDARRLTQRLGGDPDSWTDVKDNLPLLRQQRYYRYLRYGFARGDEAQNYVENIRRYYQSIIGYEQEQANKLKQEELTVEDLQVIDVPLSSAEASVSQAIETKK.

Residues 1–30 form the signal peptide; the sequence is MSRIRHHRFIQSCLVISTLLITLTGCQVES. The non-LT domain stretch occupies residues 31-270; the sequence is EPKTKLEQIR…LLEEKYFGHV (240 aa). Residues 272–495 are LT domain; that stretch reads SFDYVDTRAF…SVSQAIETKK (224 aa). Glutamate 315 is a catalytic residue.

This sequence in the N-terminal section; belongs to the bacterial solute-binding protein 3 family. In the C-terminal section; belongs to the transglycosylase Slt family.

It localises to the cell outer membrane. The catalysed reaction is Exolytic cleavage of the (1-&gt;4)-beta-glycosidic linkage between N-acetylmuramic acid (MurNAc) and N-acetylglucosamine (GlcNAc) residues in peptidoglycan, from either the reducing or the non-reducing ends of the peptidoglycan chains, with concomitant formation of a 1,6-anhydrobond in the MurNAc residue.. Functionally, murein-degrading enzyme that degrades murein glycan strands and insoluble, high-molecular weight murein sacculi, with the concomitant formation of a 1,6-anhydromuramoyl product. Lytic transglycosylases (LTs) play an integral role in the metabolism of the peptidoglycan (PG) sacculus. Their lytic action creates space within the PG sacculus to allow for its expansion as well as for the insertion of various structures such as secretion systems and flagella. This chain is Membrane-bound lytic murein transglycosylase F, found in Aliivibrio fischeri (strain ATCC 700601 / ES114) (Vibrio fischeri).